The primary structure comprises 664 residues: Semaphorin-7A (664 aa).

Residues 1–44 (MTPPPPGRAAPSAPRARVLSLPARFGLPLRLRLLLVFWVAAASA) form the signal peptide. The region spanning 53–488 (RISAVWKGQD…SQWEVSQVPL (436 aa)) is the Sema domain. Asparagine 102 carries an N-linked (GlcNAc...) asparagine glycan. Cysteine 117 and cysteine 123 are oxidised to a cystine. Residue arginine 132 is modified to Asymmetric dimethylarginine. An intrachain disulfide couples cysteine 140 to cysteine 149. Asparagine 154 and asparagine 256 each carry an N-linked (GlcNAc...) asparagine glycan. 7 disulfide bridges follow: cysteine 264/cysteine 364, cysteine 289/cysteine 333, cysteine 491/cysteine 509, cysteine 498/cysteine 539, cysteine 501/cysteine 516, cysteine 564/cysteine 611, and cysteine 585/cysteine 594. The segment at 265–267 (RGD) is interaction with integrins. Residues 265 to 267 (RGD) carry the Cell attachment site motif. Asparagine 328 is a glycosylation site (N-linked (GlcNAc...) asparagine). The region spanning 542–627 (PKPDEAPLQK…YLREAQHWEL (86 aa)) is the Ig-like C2-type domain. A glycan (N-linked (GlcNAc...) asparagine) is linked at asparagine 600. Alanine 646 carries the GPI-anchor amidated alanine lipid modification. The propeptide at 647–664 (ASFWLGVLPTLILGLLVH) is removed in mature form.

Belongs to the semaphorin family. In terms of assembly, interacts with PLXNC1. Interacts with ITGA1 and ITGB1. In terms of tissue distribution, highly expressed in activated T-cells (at protein level). Highest expression in brain. Lower in heart, thymus, spleen, testis and ovary. The expression increases in late embryonic and postnatal stages. Detected in T-cells.

It is found in the cell membrane. Its function is as follows. Plays an important role in integrin-mediated signaling and functions both in regulating cell migration and immune responses. Promotes formation of focal adhesion complexes, activation of the protein kinase PTK2/FAK1 and subsequent phosphorylation of MAPK1 and MAPK3. Promotes production of pro-inflammatory cytokines by monocytes and macrophages. Plays an important role in modulating inflammation and T-cell-mediated immune responses. Promotes axon growth in the embryonic olfactory bulb. Promotes attachment, spreading and dendrite outgrowth in melanocytes. The sequence is that of Semaphorin-7A (Sema7a) from Mus musculus (Mouse).